The chain runs to 124 residues: Large ribosomal subunit protein bL21 (124 aa).

This sequence belongs to the bacterial ribosomal protein bL21 family. In terms of assembly, part of the 50S ribosomal subunit. Contacts protein L20.

Functionally, this protein binds to 23S rRNA in the presence of protein L20. This Sinorhizobium medicae (strain WSM419) (Ensifer medicae) protein is Large ribosomal subunit protein bL21.